Here is a 412-residue protein sequence, read N- to C-terminus: MSIERAMDILRKYPLCNHCLGRLFARLGTGLDNEERGRAIKDYLLMRIHERILNEGLSDELLNDVKALAVSGHEPSIKFLSNMGINVSPARCYVCGDTIFNRLNEWVNNIVNSLRSLGIEFRSFRLGSRVPLDIQNRELSITTEFNISSAESIKREINRELGKRVSAMLGVSFNREEPDVEVVIDVNTGSVEVQIMPIYISARYRKVHRLINEEGQVKWPIDRVIQAYNAQDVVIHTGGEDPMGVRVLGNGRPVILQVVKPSKRPDVNDVYALLKDSGYDIVLDNLSRVRASAVVKMKARVRDYVITYRVLAITDNSVTNENIKSLHDYFRNRQVVQVFRRGRRIRRRISMVYELDGRVIRDRLVEFLIRCQGNLYIRGFVHGGLGDVEPSIAGTLGFSVRPVEIDILNISD.

Positions 73–197 constitute a THUMP domain; it reads HEPSIKFLSN…TGSVEVQIMP (125 aa). Positions 308 and 376 each coordinate substrate.

This sequence belongs to the pseudouridine synthase Pus10 family.

It carries out the reaction uridine(54) in tRNA = pseudouridine(54) in tRNA. It catalyses the reaction uridine(55) in tRNA = pseudouridine(55) in tRNA. Responsible for synthesis of pseudouridine from uracil-54 and uracil-55 in the psi GC loop of transfer RNAs. The protein is tRNA pseudouridine synthase Pus10 of Vulcanisaeta distributa (strain DSM 14429 / JCM 11212 / NBRC 100878 / IC-017).